Consider the following 250-residue polypeptide: Ubiquinone/menaquinone biosynthesis C-methyltransferase UbiE (250 aa).

Residues Thr-73, Asp-94, 122-123 (NA), and Ser-139 contribute to the S-adenosyl-L-methionine site.

The protein belongs to the class I-like SAM-binding methyltransferase superfamily. MenG/UbiE family.

It carries out the reaction a 2-demethylmenaquinol + S-adenosyl-L-methionine = a menaquinol + S-adenosyl-L-homocysteine + H(+). The enzyme catalyses a 2-methoxy-6-(all-trans-polyprenyl)benzene-1,4-diol + S-adenosyl-L-methionine = a 5-methoxy-2-methyl-3-(all-trans-polyprenyl)benzene-1,4-diol + S-adenosyl-L-homocysteine + H(+). It functions in the pathway quinol/quinone metabolism; menaquinone biosynthesis; menaquinol from 1,4-dihydroxy-2-naphthoate: step 2/2. Its pathway is cofactor biosynthesis; ubiquinone biosynthesis. Methyltransferase required for the conversion of demethylmenaquinol (DMKH2) to menaquinol (MKH2) and the conversion of 2-polyprenyl-6-methoxy-1,4-benzoquinol (DDMQH2) to 2-polyprenyl-3-methyl-6-methoxy-1,4-benzoquinol (DMQH2). The chain is Ubiquinone/menaquinone biosynthesis C-methyltransferase UbiE from Francisella tularensis subsp. mediasiatica (strain FSC147).